We begin with the raw amino-acid sequence, 258 residues long: Fibroblast growth factor-binding protein 3 (258 aa).

Residues 1 to 26 (MTPPKLRASLSPSLLLLLSGCLLAAA) form the signal peptide. Cystine bridges form between cysteine 59–cysteine 80 and cysteine 90–cysteine 124. The tract at residues 146-231 (RLVPRASPPA…GTGPDPDGLD (86 aa)) is disordered. Residues 186-197 (GTPPPQSAPPKE) show a composition bias toward pro residues. Positions 198 to 209 (NPSERKTNEGKR) are enriched in basic and acidic residues. The cysteines at positions 241 and 249 are disulfide-linked.

This sequence belongs to the fibroblast growth factor-binding protein family. Interacts with FGF2.

It is found in the secreted. Heparin-binding protein which binds to FGF2, prevents binding of FGF2 to heparin and probably inhibits immobilization of FGF2 on extracellular matrix glycosaminoglycans, allowing its release and subsequent activation of FGFR signaling which leads to increased vascular permeability. This Homo sapiens (Human) protein is Fibroblast growth factor-binding protein 3 (FGFBP3).